The sequence spans 274 residues: Cytochrome b-c1 complex subunit Rieske, mitochondrial (274 aa).

At 79 to 103 the chain is on the mitochondrial matrix side; sequence SHTDVKVPDFCDYRRPEVLDSTKSS. Residues 104 to 140 traverse the membrane as a helical segment; that stretch reads RESSEARKSFSYMVTAVTTVGVAYAAKNAVTQFVSSM. Residues 141–274 lie on the Mitochondrial intermembrane side of the membrane; sequence SASADVLAMA…FTSDDMVVVG (134 aa). In terms of domain architecture, Rieske spans 187 to 272; sequence EAAVELSQLR…YEFTSDDMVV (86 aa). 5 residues coordinate [2Fe-2S] cluster: C217, H219, C236, H239, and S241. Cysteines 222 and 238 form a disulfide.

Belongs to the Rieske iron-sulfur protein family. Component of the ubiquinol-cytochrome c oxidoreductase (cytochrome b-c1 complex, complex III, CIII), a multisubunit enzyme composed of 11 subunits. The complex is composed of 3 respiratory subunits cytochrome b, cytochrome c1 and Rieske protein UQCRFS1, 2 core protein subunits UQCRC1/QCR1 and UQCRC2/QCR2, and 6 low-molecular weight protein subunits UQCRH/QCR6, UQCRB/QCR7, UQCRQ/QCR8, UQCR10/QCR9, UQCR11/QCR10 and subunit 9, the cleavage product of Rieske protein UQCRFS1. The complex exists as an obligatory dimer and forms supercomplexes (SCs) in the inner mitochondrial membrane with NADH-ubiquinone oxidoreductase (complex I, CI) and cytochrome c oxidase (complex IV, CIV), resulting in different assemblies (supercomplex SCI(1)III(2)IV(1) and megacomplex MCI(2)III(2)IV(2)). Incorporation of the Rieske protein UQCRFS1 is the penultimate step in complex III assembly. Interacts with TTC19, which is involved in the clearance of UQCRFS1 fragments. As to quaternary structure, component of the ubiquinol-cytochrome c oxidoreductase (cytochrome b-c1 complex, complex III, CIII). Subunit 9 corresponds to the mitochondrial targeting sequence (MTS) of Rieske protein UQCRFS1. It is retained after processing and incorporated inside complex III, where it remains bound to the complex and localizes between the 2 core subunits UQCRC1/QCR1 and UQCRC2/QCR2. Requires [2Fe-2S] cluster as cofactor. Proteolytic processing is necessary for the correct insertion of UQCRFS1 in the complex III dimer. Several fragments are generated during UQCRFS1 insertion, most probably due to the endogenous matrix-processing peptidase (MPP) activity of the 2 core protein subunits UQCRC1/QCR1 and UQCRC2/QCR2, which are homologous to the 2 mitochondrial-processing peptidase (MPP) subunits beta-MPP and alpha-MPP respectively. The action of the protease is also necessary for the clearance of the UQCRFS1 fragments.

The protein resides in the mitochondrion inner membrane. The enzyme catalyses a quinol + 2 Fe(III)-[cytochrome c](out) = a quinone + 2 Fe(II)-[cytochrome c](out) + 2 H(+)(out). Its function is as follows. Component of the ubiquinol-cytochrome c oxidoreductase, a multisubunit transmembrane complex that is part of the mitochondrial electron transport chain which drives oxidative phosphorylation. The respiratory chain contains 3 multisubunit complexes succinate dehydrogenase (complex II, CII), ubiquinol-cytochrome c oxidoreductase (cytochrome b-c1 complex, complex III, CIII) and cytochrome c oxidase (complex IV, CIV), that cooperate to transfer electrons derived from NADH and succinate to molecular oxygen, creating an electrochemical gradient over the inner membrane that drives transmembrane transport and the ATP synthase. The cytochrome b-c1 complex catalyzes electron transfer from ubiquinol to cytochrome c, linking this redox reaction to translocation of protons across the mitochondrial inner membrane, with protons being carried across the membrane as hydrogens on the quinol. In the process called Q cycle, 2 protons are consumed from the matrix, 4 protons are released into the intermembrane space and 2 electrons are passed to cytochrome c. The Rieske protein is a catalytic core subunit containing a [2Fe-2S] iron-sulfur cluster. It cycles between 2 conformational states during catalysis to transfer electrons from the quinol bound in the Q(0) site in cytochrome b to cytochrome c1. Incorporation of UQCRFS1 is the penultimate step in complex III assembly. Functionally, component of the ubiquinol-cytochrome c oxidoreductase (cytochrome b-c1 complex, complex III, CIII). UQCRFS1 undergoes proteolytic processing once it is incorporated in the complex III dimer. One of the fragments, called subunit 9, corresponds to its mitochondrial targeting sequence (MTS). The proteolytic processing is necessary for the correct insertion of UQCRFS1 in the complex III dimer, but the persistence of UQCRFS1-derived fragments may prevent newly imported UQCRFS1 to be processed and assembled into complex III and is detrimental for the complex III structure and function. This is Cytochrome b-c1 complex subunit Rieske, mitochondrial (UQCRFS1) from Colobus polykomos (Western black-and-white colobus monkey).